A 151-amino-acid chain; its full sequence is Large ribosomal subunit protein uL23m (151 aa).

Over residues 120–143 (DDKKSLEDAKKNHKKFLDKNKDRP) the composition is skewed to basic and acidic residues. The disordered stretch occupies residues 120 to 151 (DDKKSLEDAKKNHKKFLDKNKDRPGTPGWFSI).

It belongs to the universal ribosomal protein uL23 family. As to quaternary structure, component of the mitochondrial ribosome large subunit (39S) which comprises a 16S rRNA and about 50 distinct proteins.

The protein resides in the mitochondrion. This chain is Large ribosomal subunit protein uL23m (mRpL23), found in Anopheles gambiae (African malaria mosquito).